Consider the following 426-residue polypeptide: Glutamate-1-semialdehyde 2,1-aminomutase (426 aa).

Residue K265 is modified to N6-(pyridoxal phosphate)lysine.

The protein belongs to the class-III pyridoxal-phosphate-dependent aminotransferase family. HemL subfamily. As to quaternary structure, homodimer. It depends on pyridoxal 5'-phosphate as a cofactor.

The protein localises to the cytoplasm. It carries out the reaction (S)-4-amino-5-oxopentanoate = 5-aminolevulinate. The protein operates within porphyrin-containing compound metabolism; protoporphyrin-IX biosynthesis; 5-aminolevulinate from L-glutamyl-tRNA(Glu): step 2/2. The protein is Glutamate-1-semialdehyde 2,1-aminomutase of Escherichia coli O127:H6 (strain E2348/69 / EPEC).